Consider the following 78-residue polypeptide: DNA-directed RNA polymerase subunit omega (78 aa).

It belongs to the RNA polymerase subunit omega family. As to quaternary structure, in cyanobacteria the RNAP catalytic core is composed of 2 alpha, 1 beta, 1 beta', 1 gamma and 1 omega subunit. When a sigma factor is associated with the core the holoenzyme is formed, which can initiate transcription.

The catalysed reaction is RNA(n) + a ribonucleoside 5'-triphosphate = RNA(n+1) + diphosphate. Its function is as follows. Promotes RNA polymerase assembly. Latches the N- and C-terminal regions of the beta' subunit thereby facilitating its interaction with the beta and alpha subunits. In Prochlorococcus marinus (strain AS9601), this protein is DNA-directed RNA polymerase subunit omega.